The chain runs to 72 residues: ATP synthase subunit L (72 aa).

In terms of assembly, F-type ATP synthases have 2 components, the catalytic core F(1) and the membrane-embedded component F(0), linked together by a central stalk and a peripheral stalk. The central stalk, also called rotor shaft, is often seen as part of F(1). The peripheral stalk is seen as part of F(0). F(0) contains the membrane channel next to the rotor. F-type ATP synthases form dimers but each monomer functions independently in ATP generation. The dimer consists of 18 different polypeptides: ATP1 (subunit alpha, part of F(1), 3 molecules per monomer), ATP2 (subunit beta, part of F(1), 3 molecules per monomer), ATP3 (subunit gamma, part of the central stalk), ATP4 (subunit b, part of the peripheral stalk), ATP5/OSCP (subunit 5/OSCP, part of the peripheral stalk), ATP6 (subunit a, part of the peripheral stalk), ATP7 (subunit d, part of the peripheral stalk), ATP8 (subunit 8, part of the peripheral stalk), OLI1 (subunit c, part of the rotor, 10 molecules per monomer), ATP14 (subunit h, part of the peripheral stalk), ATP15 (subunit epsilon, part of the central stalk), ATP16 (subunit delta, part of the central stalk), ATP17 (subunit f, part of the peripheral stalk), ATP18 (subunit i/j, part of the peripheral stalk). Dimer-specific subunits are ATP19 (subunit k, at interface between monomers), ATP20 (subunit g, at interface between monomers), TIM11 (subunit e, at interface between monomers). Also contains subunit L.

The protein resides in the mitochondrion inner membrane. Functionally, mitochondrial membrane ATP synthase (F(1)F(0) ATP synthase or Complex V) produces ATP from ADP in the presence of a proton gradient across the membrane which is generated by electron transport complexes of the respiratory chain. F-type ATP synthases consist of two structural domains, F(1) - containing the extramembraneous catalytic core, and F(0) - containing the membrane proton channel, linked together by a central stalk and a peripheral stalk. During catalysis, ATP synthesis in the catalytic domain of F(1) is coupled via a rotary mechanism of the central stalk subunits to proton translocation. The chain is ATP synthase subunit L from Pichia angusta (Yeast).